Here is a 393-residue protein sequence, read N- to C-terminus: MHNSPAVSSAKSFDLTSTAFLIVAFLTGIAGALQTPTLSIFLTDEVHARPAMVGFFFTGSAVIGILVSQFLAGRSDKRGDRKSLIVFCCLLGVLACTLFAWNRNYFVLLFVGVFLSSFGSTANPQMFALAREHADKTGREAVMFSSFLRAQVSLAWVIGPPLAYALAMGFSFTVMYLSAAVAFIVCGVMVWLFLPSMRKELPLATGTIEAPRRNRRDTLLLFVICTLMWGSNSLYIINMPLFIINELHLPEKLAGVMMGTAAGLEIPTMLIAGYFAKRLGKRFLMRVAAVGGVCFYAGMLMAHSPVILLGLQLLNAIFIGILGGIGMLYFQDLMPGQAGSATTLYTNTSRVGWIIAGSVAGIVAEIWNYHAVFWFAMVMIIATLFCLLRIKDV.

A run of 12 helical transmembrane segments spans residues Phe13 to Leu33, Ala51 to Leu71, Lys82 to Asn102, Phe106 to Met126, Val152 to Phe172, Val174 to Leu194, Leu219 to Met239, Leu253 to Gly273, Phe283 to His303, Val306 to Gly326, Leu344 to Ala364, and Ile366 to Cys386.

The protein belongs to the major facilitator superfamily. Set transporter family.

The protein localises to the cell inner membrane. Its function is as follows. Involved in the efflux of sugars. The physiological role may be the detoxification of non-metabolizable sugar analogs. Can transport lactose and glucose. The protein is Sugar efflux transporter B (setB) of Escherichia coli (strain K12).